We begin with the raw amino-acid sequence, 722 residues long: Polyribonucleotide nucleotidyltransferase (722 aa).

2 residues coordinate Mg(2+): D495 and D501. Residues 562-621 (PRLLSFRIDPELIGTVIGPGGRTIKGITERTNTKIDIEDGGIVTIASHDGAAAEEAQRII) enclose the KH domain. An S1 motif domain is found at 631–699 (GEIFPGSITR…NRGRINLTLR (69 aa)). Residues 700–722 (GVSQNGGMSNYPEPTPTPVAPLT) form a disordered region. The span at 712-722 (EPTPTPVAPLT) shows a compositional bias: pro residues.

The protein belongs to the polyribonucleotide nucleotidyltransferase family. Requires Mg(2+) as cofactor.

It localises to the cytoplasm. The enzyme catalyses RNA(n+1) + phosphate = RNA(n) + a ribonucleoside 5'-diphosphate. Functionally, involved in mRNA degradation. Catalyzes the phosphorolysis of single-stranded polyribonucleotides processively in the 3'- to 5'-direction. This is Polyribonucleotide nucleotidyltransferase from Prochlorococcus marinus (strain NATL2A).